The chain runs to 290 residues: Endo-1,4-beta-xylanase B (290 aa).

An N-terminal signal peptide occupies residues 1-19; it reads MVSFNSLLVAVSAATCALA. N26 carries N-linked (GlcNAc...) asparagine glycosylation. One can recognise a GH11 domain in the interval 34 to 222; that stretch reads QSTPAGTGTN…SSGSSTVTVN (189 aa). Residue E118 is the Nucleophile of the active site. E209 acts as the Proton donor in catalysis. A disordered region spans residues 223-248; that stretch reads PAGGVTSPIAPTGPSSVSTTPSGPSS. Low complexity predominate over residues 234 to 248; that stretch reads TGPSSVSTTPSGPSS. The region spanning 255-290 is the CBM1 domain; it reads TCSALYGQCGGQGWTGPTCCSSGTCKFSNNWYSQCL.

Belongs to the glycosyl hydrolase 11 (cellulase G) family.

The protein resides in the secreted. The enzyme catalyses Endohydrolysis of (1-&gt;4)-beta-D-xylosidic linkages in xylans.. It functions in the pathway glycan degradation; xylan degradation. Functionally, endo-1,4-beta-xylanase involved in the hydrolysis of xylan, a major structural heterogeneous polysaccharide found in plant biomass representing the second most abundant polysaccharide in the biosphere, after cellulose. This is Endo-1,4-beta-xylanase B (xynB) from Phanerodontia chrysosporium (White-rot fungus).